A 218-amino-acid polypeptide reads, in one-letter code: Methylthioribulose-1-phosphate dehydratase (218 aa).

Zn(2+) contacts are provided by histidine 107 and histidine 109.

The protein belongs to the aldolase class II family. MtnB subfamily. Requires Zn(2+) as cofactor.

The enzyme catalyses 5-(methylsulfanyl)-D-ribulose 1-phosphate = 5-methylsulfanyl-2,3-dioxopentyl phosphate + H2O. Its pathway is amino-acid biosynthesis; L-methionine biosynthesis via salvage pathway; L-methionine from S-methyl-5-thio-alpha-D-ribose 1-phosphate: step 2/6. Functionally, catalyzes the dehydration of methylthioribulose-1-phosphate (MTRu-1-P) into 2,3-diketo-5-methylthiopentyl-1-phosphate (DK-MTP-1-P). The sequence is that of Methylthioribulose-1-phosphate dehydratase from Xylella fastidiosa (strain 9a5c).